The primary structure comprises 358 residues: Probable branched-chain-amino-acid aminotransferase (358 aa).

Lys196 bears the N6-(pyridoxal phosphate)lysine mark.

Belongs to the class-IV pyridoxal-phosphate-dependent aminotransferase family. It depends on pyridoxal 5'-phosphate as a cofactor.

The catalysed reaction is L-leucine + 2-oxoglutarate = 4-methyl-2-oxopentanoate + L-glutamate. It carries out the reaction L-isoleucine + 2-oxoglutarate = (S)-3-methyl-2-oxopentanoate + L-glutamate. The enzyme catalyses L-valine + 2-oxoglutarate = 3-methyl-2-oxobutanoate + L-glutamate. The protein operates within amino-acid biosynthesis; L-isoleucine biosynthesis; L-isoleucine from 2-oxobutanoate: step 4/4. Its pathway is amino-acid biosynthesis; L-leucine biosynthesis; L-leucine from 3-methyl-2-oxobutanoate: step 4/4. It functions in the pathway amino-acid biosynthesis; L-valine biosynthesis; L-valine from pyruvate: step 4/4. Its function is as follows. Acts on leucine, isoleucine and valine. This chain is Probable branched-chain-amino-acid aminotransferase (ilvE), found in Staphylococcus epidermidis (strain ATCC 35984 / DSM 28319 / BCRC 17069 / CCUG 31568 / BM 3577 / RP62A).